The primary structure comprises 299 residues: GTPase Era (299 aa).

An Era-type G domain is found at 9–177; that stretch reads RSGSVAVIGR…VGDLLKLVPE (169 aa). The interval 17-24 is G1; sequence GRPNVGKS. 17-24 contacts GTP; that stretch reads GRPNVGKS. A G2 region spans residues 43 to 47; the sequence is QTTRH. The tract at residues 64–67 is G3; that stretch reads DTPG. GTP is bound by residues 64-68 and 126-129; these read DTPGL and NKVD. Residues 126–129 are G4; that stretch reads NKVD. The segment at 156–158 is G5; that stretch reads VSA. Residues 200 to 284 form the KH type-2 domain; it reads VREQLMRQLG…FLETWVRVRE (85 aa).

Belongs to the TRAFAC class TrmE-Era-EngA-EngB-Septin-like GTPase superfamily. Era GTPase family. In terms of assembly, monomer.

The protein localises to the cytoplasm. The protein resides in the cell inner membrane. An essential GTPase that binds both GDP and GTP, with rapid nucleotide exchange. Plays a role in 16S rRNA processing and 30S ribosomal subunit biogenesis and possibly also in cell cycle regulation and energy metabolism. This is GTPase Era from Xanthomonas oryzae pv. oryzae (strain MAFF 311018).